A 751-amino-acid polypeptide reads, in one-letter code: Zinc finger protein 337 (751 aa).

One can recognise a KRAB domain in the interval Leu-12–Ala-83. Over residues Gln-101–Asp-116 the composition is skewed to low complexity. Residues Gln-101–Thr-163 form a disordered region. The segment at Phe-180–His-202 adopts a C2H2-type 1; degenerate zinc-finger fold. C2H2-type zinc fingers lie at residues Phe-208–His-230, Tyr-236–His-258, Phe-264–His-286, Tyr-292–His-314, Phe-320–His-342, Tyr-348–His-370, Phe-376–His-398, Phe-404–His-426, and Phe-432–His-454. Residue Lys-458 forms a Glycyl lysine isopeptide (Lys-Gly) (interchain with G-Cter in SUMO2) linkage. 10 consecutive C2H2-type zinc fingers follow at residues Phe-460–His-482, Tyr-488–His-510, Phe-516–His-538, Phe-544–His-566, Phe-572–His-594, Phe-600–His-622, Phe-628–His-650, Phe-656–His-679, Phe-685–His-707, and Tyr-713–His-735.

It belongs to the krueppel C2H2-type zinc-finger protein family.

The protein localises to the nucleus. In terms of biological role, may be involved in transcriptional regulation. This chain is Zinc finger protein 337 (ZNF337), found in Homo sapiens (Human).